A 115-amino-acid chain; its full sequence is NADH-ubiquinone oxidoreductase chain 3 (115 aa).

3 helical membrane-spanning segments follow: residues 4–24 (LVALSVNIALSMCLITIAFWL), 55–75 (FFLVAITFLLFDLEIALLLPL), and 87–107 (MMLTSFILVSVLALGLAYEWM).

It belongs to the complex I subunit 3 family. In terms of assembly, core subunit of respiratory chain NADH dehydrogenase (Complex I) which is composed of 45 different subunits. Interacts with TMEM186. Interacts with TMEM242.

It localises to the mitochondrion inner membrane. The catalysed reaction is a ubiquinone + NADH + 5 H(+)(in) = a ubiquinol + NAD(+) + 4 H(+)(out). Its function is as follows. Core subunit of the mitochondrial membrane respiratory chain NADH dehydrogenase (Complex I) which catalyzes electron transfer from NADH through the respiratory chain, using ubiquinone as an electron acceptor. Essential for the catalytic activity of complex I. This Habromys lophurus (Crested-tailed deer mouse) protein is NADH-ubiquinone oxidoreductase chain 3.